A 745-amino-acid chain; its full sequence is uncharacterized protein (745 aa).

Residues 158-256 (NQVCDYIELH…HQTPKQYRGD (99 aa)) form the HTH araC/xylS-type domain. 2 DNA-binding regions (H-T-H motif) span residues 175 to 196 (SELSEYVGWSESHLSKKFAESL) and 223 to 246 (ITDIALQNGFSSAASFARTFKHFT).

This is an uncharacterized protein from Staphylococcus aureus (strain MRSA252).